We begin with the raw amino-acid sequence, 144 residues long: D-aminoacyl-tRNA deacylase (144 aa).

Positions 136–137 (GP) match the Gly-cisPro motif, important for rejection of L-amino acids motif.

Belongs to the DTD family. Homodimer.

The protein localises to the cytoplasm. It catalyses the reaction glycyl-tRNA(Ala) + H2O = tRNA(Ala) + glycine + H(+). The enzyme catalyses a D-aminoacyl-tRNA + H2O = a tRNA + a D-alpha-amino acid + H(+). In terms of biological role, an aminoacyl-tRNA editing enzyme that deacylates mischarged D-aminoacyl-tRNAs. Also deacylates mischarged glycyl-tRNA(Ala), protecting cells against glycine mischarging by AlaRS. Acts via tRNA-based rather than protein-based catalysis; rejects L-amino acids rather than detecting D-amino acids in the active site. By recycling D-aminoacyl-tRNA to D-amino acids and free tRNA molecules, this enzyme counteracts the toxicity associated with the formation of D-aminoacyl-tRNA entities in vivo and helps enforce protein L-homochirality. The chain is D-aminoacyl-tRNA deacylase from Haemophilus ducreyi (strain 35000HP / ATCC 700724).